The sequence spans 488 residues: Probable malate:quinone oxidoreductase (488 aa).

This sequence belongs to the MQO family. The cofactor is FAD.

The catalysed reaction is (S)-malate + a quinone = a quinol + oxaloacetate. The protein operates within carbohydrate metabolism; tricarboxylic acid cycle; oxaloacetate from (S)-malate (quinone route): step 1/1. The sequence is that of Probable malate:quinone oxidoreductase from Neisseria meningitidis serogroup C (strain 053442).